The following is a 166-amino-acid chain: Prorelaxin H1 (166 aa).

The first 5 residues, 1–5, serve as a signal peptide directing secretion; the sequence is SRAVA. 3 disulfide bridges follow: C16–C153, C28–C166, and C152–C157. The propeptide at 37 to 139 is connecting peptide; sequence SLSQEDAPQT…KYLGLDTHSQ (103 aa).

It belongs to the insulin family. Heterodimer of a B chain and an A chain linked by two disulfide bonds. Expressed in the corpus luteum of pregnancy but not in the placenta.

The protein localises to the secreted. Relaxin is an ovarian hormone that acts with estrogen to produce dilatation of the birth canal in many mammals. May be involved in remodeling of connective tissues during pregnancy, promoting growth of pubic ligaments and ripening of the cervix. In Pan troglodytes (Chimpanzee), this protein is Prorelaxin H1 (RNL1).